The following is a 152-amino-acid chain: Large ribosomal subunit protein uL15 (152 aa).

Residues 1–55 (MRLHELKPNEGATHKKKRVGRGIGSGHGKTSTKGQKGQTSRSGDSKLPARFEGGQ) are disordered. Over residues 28–42 (GKTSTKGQKGQTSRS) the composition is skewed to polar residues.

This sequence belongs to the universal ribosomal protein uL15 family. In terms of assembly, part of the 50S ribosomal subunit.

In terms of biological role, binds to the 23S rRNA. In Sulfurihydrogenibium sp. (strain YO3AOP1), this protein is Large ribosomal subunit protein uL15.